The sequence spans 278 residues: Tryptophan synthase alpha chain (278 aa).

Active-site proton acceptor residues include E50 and D61.

It belongs to the TrpA family. In terms of assembly, tetramer of two alpha and two beta chains.

It carries out the reaction (1S,2R)-1-C-(indol-3-yl)glycerol 3-phosphate + L-serine = D-glyceraldehyde 3-phosphate + L-tryptophan + H2O. It functions in the pathway amino-acid biosynthesis; L-tryptophan biosynthesis; L-tryptophan from chorismate: step 5/5. Functionally, the alpha subunit is responsible for the aldol cleavage of indoleglycerol phosphate to indole and glyceraldehyde 3-phosphate. This Rhodopseudomonas palustris (strain BisA53) protein is Tryptophan synthase alpha chain.